A 309-amino-acid chain; its full sequence is Probable copper-dependent oxygenase clz3 (309 aa).

Residues Asn9 and Asn249 are each glycosylated (N-linked (GlcNAc...) asparagine). A helical transmembrane segment spans residues 257–277 (FAVPLAAIAFIALIISGGYVI).

The protein belongs to the clz3 oxygenase family.

It localises to the membrane. The protein operates within secondary metabolite biosynthesis. Probable copper-dependent oxygenase; part of the gene cluster that mediates the biosynthesis of squalestatin S1 (SQS1, also known as zaragozic acid A), a heavily oxidized fungal polyketide that offers potent cholesterol lowering activity by targeting squalene synthase (SS). SQS1 is composed of a 2,8-dioxobicyclic[3.2.1]octane-3,4,5-tricarboxyclic acid core that is connected to two lipophilic polyketide arms. These initial steps feature the priming of an unusual benzoic acid starter unit onto the highly reducing polyketide synthase clz14, followed by oxaloacetate extension and product release to generate a tricarboxylic acid containing product. The phenylalanine ammonia lyase (PAL) clz10 and the acyl-CoA ligase clz12 are involved in transforming phenylalanine into benzoyl-CoA. The citrate synthase-like protein clz17 is involved in connecting the C-alpha-carbons of the hexaketide chain and oxaloacetate to afford the tricarboxylic acid unit. The potential hydrolytic enzymes, clz11 and clz13, are in close proximity to pks2 and may participate in product release. On the other side, the tetraketide arm is synthesized by a the squalestatin tetraketide synthase clz2 and enzymatically esterified to the core in the last biosynthetic step, by the acetyltransferase clz6. The biosynthesis of the tetraketide must involve 3 rounds of chain extension. After the first and second rounds methyl-transfer occurs, and in all rounds of extension the ketoreductase and dehydratase are active. The enoyl reductase and C-MeT of clz2 are not active in the final round of extension. The acetyltransferase clz6 appears to have a broad substrate selectivity for its acyl CoA substrate, allowing the in vitro synthesis of novel squalestatins. The biosynthesis of SQS1 requires several oxidative steps likely performed by oxidoreductases clz3, clz15 and clz16. Finally, in support of the identification of the cluster as being responsible for SQS1 production, the cluster contains a gene encoding a putative squalene synthase (SS) clz20, suggesting a likely mechanism for self-resistance. This is Probable copper-dependent oxygenase clz3 from Cochliobolus lunatus (Filamentous fungus).